A 99-amino-acid chain; its full sequence is UPF0235 protein AHA_3661 (99 aa).

Belongs to the UPF0235 family.

This chain is UPF0235 protein AHA_3661, found in Aeromonas hydrophila subsp. hydrophila (strain ATCC 7966 / DSM 30187 / BCRC 13018 / CCUG 14551 / JCM 1027 / KCTC 2358 / NCIMB 9240 / NCTC 8049).